The primary structure comprises 730 residues: Zinc finger protein 615 (730 aa).

The KRAB domain occupies 7-78 (LTLEDVAVDF…EDEIYSRICF (72 aa)). C2H2-type zinc fingers lie at residues 203 to 225 (HVCSECGKAFLKLSQFIDHQRVH), 231 to 253 (HVCSMCGKAFSRKSRLMDHQRTH), 259 to 281 (YECTECDKTFLKKSQLNIHQKTH), 287 to 309 (YTCSECGKAFIKKCRLIYHQRTH), 315 to 337 (HGCSVCGKAFSTKFSLTTHQKTH), 343 to 365 (YICSECGKGFIEKRRLIAHHRTH), 371 to 393 (FICNKCGKGFTLKNSLITHQQTH), 399 to 421 (YTCSECGKGFSMKHCLMVHQRTH), 427 to 449 (YKCNECGKGFALKSPLIRHQRTH), 455 to 477 (YVCTECRKGFTMKSDLIVHQRTH), 483 to 505 (YICNDCGKGFTVKSRLIVHQRTH), 511 to 533 (YVCGECGKGFPAKIRLMGHQRTH), 539 to 561 (YICDECGKGFTEKSHLNVHRRTH), 567 to 589 (YVCSECGKGLTGKSMLIAHQRTH), 595 to 617 (YICNECGKGFTMKSTLSIHQQTH), 623 to 645 (YKCNECDKSFRKKTCLIQHQRFH), 651 to 673 (FACTECGKFSLRKNDLITHQRIH), 679 to 701 (YKCSDCGKAFTTKSGLNVHQRKH), and 707 to 729 (YGCSDCGKAFAHLSILVKHKRIH).

It belongs to the krueppel C2H2-type zinc-finger protein family.

It is found in the nucleus. Functionally, may be involved in transcriptional regulation. The sequence is that of Zinc finger protein 615 (ZNF615) from Pongo abelii (Sumatran orangutan).